A 154-amino-acid polypeptide reads, in one-letter code: uncharacterized protein (154 aa).

Positions 91–154 are disordered; sequence PSEESWGCRQ…WGSPQPSRGA (64 aa). Residues 134-154 are compositionally biased toward polar residues; it reads SRDTSPLGGQSWGSPQPSRGA.

This is an uncharacterized protein from Homo sapiens (Human).